The chain runs to 607 residues: Fucose-1-phosphate guanylyltransferase (607 aa).

Residues 1 to 21 (MRAVRRGLREGGAMAAARDPP) are disordered.

Expressed in many tissues.

Its subcellular location is the cytoplasm. It catalyses the reaction beta-L-fucose 1-phosphate + GTP + H(+) = GDP-beta-L-fucose + diphosphate. Catalyzes the formation of GDP-L-fucose from GTP and L-fucose-1-phosphate. Functions as a salvage pathway to reutilize L-fucose arising from the turnover of glycoproteins and glycolipids. This Homo sapiens (Human) protein is Fucose-1-phosphate guanylyltransferase.